Consider the following 201-residue polypeptide: Recombination protein RecR (201 aa).

Residues cysteine 57–cysteine 72 form a C4-type zinc finger. Residues glycine 81–proline 176 form the Toprim domain.

This sequence belongs to the RecR family.

In terms of biological role, may play a role in DNA repair. It seems to be involved in an RecBC-independent recombinational process of DNA repair. It may act with RecF and RecO. The chain is Recombination protein RecR from Yersinia enterocolitica serotype O:8 / biotype 1B (strain NCTC 13174 / 8081).